The primary structure comprises 336 residues: Fructose-1,6-bisphosphatase class 1 (336 aa).

4 residues coordinate Mg(2+): E90, D112, L114, and D115. Residues 115–118, N211, and K277 each bind substrate; that span reads DGSS. Residue E283 coordinates Mg(2+).

The protein belongs to the FBPase class 1 family. Homotetramer. Mg(2+) is required as a cofactor.

It is found in the cytoplasm. It carries out the reaction beta-D-fructose 1,6-bisphosphate + H2O = beta-D-fructose 6-phosphate + phosphate. Its pathway is carbohydrate biosynthesis; gluconeogenesis. This is Fructose-1,6-bisphosphatase class 1 from Pseudomonas aeruginosa (strain UCBPP-PA14).